Here is a 60-residue protein sequence, read N- to C-terminus: Large ribosomal subunit protein uL30 (60 aa).

Belongs to the universal ribosomal protein uL30 family. Part of the 50S ribosomal subunit.

The chain is Large ribosomal subunit protein uL30 from Streptococcus thermophilus (strain CNRZ 1066).